The primary structure comprises 321 residues: Large ribosomal RNA subunit accumulation protein YCED homolog 1, chloroplastic (321 aa).

A chloroplast-targeting transit peptide spans Met1–Ser32.

Belongs to the DUF177 domain family.

Its subcellular location is the plastid. The protein localises to the chloroplast stroma. It is found in the chloroplast nucleoid. Its function is as follows. Plays a role in synthesis, processing and/or stability of 23S rRNA. Required for embryogenesis. In Arabidopsis thaliana (Mouse-ear cress), this protein is Large ribosomal RNA subunit accumulation protein YCED homolog 1, chloroplastic.